A 233-amino-acid polypeptide reads, in one-letter code: UPF0173 metal-dependent hydrolase Igni_1254 (233 aa).

It belongs to the UPF0173 family.

This chain is UPF0173 metal-dependent hydrolase Igni_1254, found in Ignicoccus hospitalis (strain KIN4/I / DSM 18386 / JCM 14125).